We begin with the raw amino-acid sequence, 334 residues long: Serine/Arginine-related protein 53 (334 aa).

Basic and acidic residues predominate over residues 1–13; sequence MGRRSSDTEEESR. Disordered stretches follow at residues 1–179, 198–220, and 246–290; these read MGRR…HLPP, DEAL…EDQA, and RSSK…SIPT. A compositionally biased stretch (basic residues) spans 14–24; the sequence is SKRKKKHRRRS. Residues 44–62 show a composition bias toward basic and acidic residues; it reads PRSDSRSWSRDRQLRSHSY. Over residues 78-118 the composition is skewed to basic residues; it reads SRRKRSRSRSRGRGKPYRVQRSRSKSRTRRSRSRPRPRSHS. Basic and acidic residues-rich tracts occupy residues 132-166, 198-218, and 247-256; these read RSRD…KRGD, DEAL…KEED, and SSKDVKKAVE. A coiled-coil region spans residues 180-236; sequence AEQAKARLQLVLEAAAKADEALKAKERSEEEAKRRKEEDQATLVEQVKRVKEIEAIE. Over residues 265 to 278 the composition is skewed to low complexity; that stretch reads AASGPASAAAEPPS.

As to quaternary structure, interacts (via Arg/Ser-rich domain) with LUC7L3, RBM39 and RSF1. In terms of processing, phosphorylated.

Its subcellular location is the nucleus. It localises to the nucleus speckle. The protein localises to the cytoplasm. Its function is as follows. Plays a role in pre-mRNA splicing. Involved in both constitutive and alternative pre-mRNA splicing. May have a role in the recognition of the 3' splice site during the second step of splicing. This chain is Serine/Arginine-related protein 53 (Rsrc1), found in Mus musculus (Mouse).